We begin with the raw amino-acid sequence, 129 residues long: Cytochrome c oxidase subunit 5B, mitochondrial (129 aa).

A mitochondrion-targeting transit peptide spans 1–31; the sequence is MASRLLRGVGALAAQALRAHGPRGVAATRSM. Lysine 68 and lysine 86 each carry N6-acetyllysine. Zn(2+)-binding residues include cysteine 91, cysteine 93, cysteine 113, and cysteine 116. Residue lysine 121 is modified to N6-acetyllysine.

The protein belongs to the cytochrome c oxidase subunit 5B family. Component of the cytochrome c oxidase (complex IV, CIV), a multisubunit enzyme composed of 14 subunits. The complex is composed of a catalytic core of 3 subunits MT-CO1, MT-CO2 and MT-CO3, encoded in the mitochondrial DNA, and 11 supernumerary subunits COX4I, COX5A, COX5B, COX6A, COX6B, COX6C, COX7A, COX7B, COX7C, COX8 and NDUFA4, which are encoded in the nuclear genome. The complex exists as a monomer or a dimer and forms supercomplexes (SCs) in the inner mitochondrial membrane with NADH-ubiquinone oxidoreductase (complex I, CI) and ubiquinol-cytochrome c oxidoreductase (cytochrome b-c1 complex, complex III, CIII), resulting in different assemblies (supercomplex SCI(1)III(2)IV(1) and megacomplex MCI(2)III(2)IV(2)).

The protein localises to the mitochondrion inner membrane. It participates in energy metabolism; oxidative phosphorylation. Its function is as follows. Component of the cytochrome c oxidase, the last enzyme in the mitochondrial electron transport chain which drives oxidative phosphorylation. The respiratory chain contains 3 multisubunit complexes succinate dehydrogenase (complex II, CII), ubiquinol-cytochrome c oxidoreductase (cytochrome b-c1 complex, complex III, CIII) and cytochrome c oxidase (complex IV, CIV), that cooperate to transfer electrons derived from NADH and succinate to molecular oxygen, creating an electrochemical gradient over the inner membrane that drives transmembrane transport and the ATP synthase. Cytochrome c oxidase is the component of the respiratory chain that catalyzes the reduction of oxygen to water. Electrons originating from reduced cytochrome c in the intermembrane space (IMS) are transferred via the dinuclear copper A center (CU(A)) of subunit 2 and heme A of subunit 1 to the active site in subunit 1, a binuclear center (BNC) formed by heme A3 and copper B (CU(B)). The BNC reduces molecular oxygen to 2 water molecules using 4 electrons from cytochrome c in the IMS and 4 protons from the mitochondrial matrix. The protein is Cytochrome c oxidase subunit 5B, mitochondrial (Cox5b) of Rattus norvegicus (Rat).